Reading from the N-terminus, the 298-residue chain is Protein OS-9 homolog (298 aa).

The signal sequence occupies residues 1 to 25 (MGLAGGARVVLFVVAAAAAAALTAA). N95 carries N-linked (GlcNAc...) asparagine glycosylation. The 126-residue stretch at 121–246 (DQCFYRHEGW…TVQSPMLCKN (126 aa)) folds into the MRH domain. C123 and C136 are disulfide-bonded. The a mannooligosaccharide derivative site is built by W130, W131, and Q143. Residues N171 and N197 are each glycosylated (N-linked (GlcNAc...) asparagine). Cystine bridges form between C201/C232 and C216/C244. 4 residues coordinate a mannooligosaccharide derivative: D202, R208, E228, and Y234.

Belongs to the OS-9 family. As to quaternary structure, interacts with HRD3.

It is found in the endoplasmic reticulum. Functionally, lectin which functions in endoplasmic reticulum (ER) quality control and ER-associated degradation (ERAD). May bind terminally misfolded non-glycosylated proteins as well as improperly folded glycoproteins, retain them in the ER, and possibly transfer them to the ubiquitination machinery and promote their degradation. In Oryza sativa subsp. japonica (Rice), this protein is Protein OS-9 homolog.